Consider the following 126-residue polypeptide: Protein ApaG (126 aa).

The region spanning 2–126 is the ApaG domain; that stretch reads SDTQHQVNVR…FRLAVPGALH (125 aa).

The protein is Protein ApaG of Pseudomonas paraeruginosa (strain DSM 24068 / PA7) (Pseudomonas aeruginosa (strain PA7)).